Reading from the N-terminus, the 231-residue chain is MRERAVAACDGASKGNPGPAGWAWVVADASENPVRWEAGPLGKATNNIAELTALERLLASTDPDVPLEVRMDSQYAMKAVTTWLPGWKRNGWKTAAGKPVANRELVVRIDELLDGRSVEFRYVPAHQVDGDRLNDFADRAASQAAVVQEAAGSALGSPEPPPAPDVPAARRAPRRGSSGAARKGGGGSSARTIKAKFPGRCLCGRPYAAGEPIAKNDQGWGHPECRTVAAG.

In terms of domain architecture, RNase H type-1 spans M1–V146. Mg(2+) contacts are provided by D10, E50, D72, and D138. Low complexity-rich tracts occupy residues Q148–S157 and V166–A181. Disordered regions lie at residues Q148–T192 and P212–G231.

Belongs to the RNase H family. Monomer. Requires Mg(2+) as cofactor.

The protein localises to the cytoplasm. It carries out the reaction Endonucleolytic cleavage to 5'-phosphomonoester.. Functionally, endonuclease that specifically degrades the RNA of RNA-DNA hybrids. This chain is Ribonuclease HI (rnhA), found in Streptomyces coelicolor (strain ATCC BAA-471 / A3(2) / M145).